Consider the following 196-residue polypeptide: Flagellin B2 (196 aa).

The propeptide occupies 1–12 (MFEFITDEDERG).

Belongs to the archaeal flagellin family. In terms of processing, glycosylated.

It is found in the archaeal flagellum. Functionally, flagellin is the subunit protein which polymerizes to form the filaments of archaeal flagella. This is Flagellin B2 (flaB2) from Halobacterium salinarum (strain ATCC 700922 / JCM 11081 / NRC-1) (Halobacterium halobium).